Consider the following 193-residue polypeptide: ATP synthase subunit b (193 aa).

A helical membrane pass occupies residues 24–44 (PLAELIVGLLAFGLLVGFFFW).

It belongs to the ATPase B chain family. In terms of assembly, F-type ATPases have 2 components, F(1) - the catalytic core - and F(0) - the membrane proton channel. F(1) has five subunits: alpha(3), beta(3), gamma(1), delta(1), epsilon(1). F(0) has three main subunits: a(1), b(2) and c(10-14). The alpha and beta chains form an alternating ring which encloses part of the gamma chain. F(1) is attached to F(0) by a central stalk formed by the gamma and epsilon chains, while a peripheral stalk is formed by the delta and b chains.

It is found in the cell membrane. Functionally, f(1)F(0) ATP synthase produces ATP from ADP in the presence of a proton or sodium gradient. F-type ATPases consist of two structural domains, F(1) containing the extramembraneous catalytic core and F(0) containing the membrane proton channel, linked together by a central stalk and a peripheral stalk. During catalysis, ATP synthesis in the catalytic domain of F(1) is coupled via a rotary mechanism of the central stalk subunits to proton translocation. Component of the F(0) channel, it forms part of the peripheral stalk, linking F(1) to F(0). This Parafrankia sp. (strain EAN1pec) protein is ATP synthase subunit b.